We begin with the raw amino-acid sequence, 236 residues long: Ribosome maturation protein SDO1 homolog (236 aa).

This sequence belongs to the SDO1/SBDS family. In terms of assembly, crystallized in association with 70S ribosomes.

The polypeptide is Ribosome maturation protein SDO1 homolog (Thermococcus kodakarensis (strain ATCC BAA-918 / JCM 12380 / KOD1) (Pyrococcus kodakaraensis (strain KOD1))).